The sequence spans 330 residues: DNA-directed RNA polymerase subunit alpha (330 aa).

The tract at residues 1–232 (MAILAFQKPE…SHFSLFAENK (232 aa)) is alpha N-terminal domain (alpha-NTD). The tract at residues 248–330 (EDSLHMRQLL…DISKYKLDKD (83 aa)) is alpha C-terminal domain (alpha-CTD).

The protein belongs to the RNA polymerase alpha chain family. In terms of assembly, homodimer. The RNAP catalytic core consists of 2 alpha, 1 beta, 1 beta' and 1 omega subunit. When a sigma factor is associated with the core the holoenzyme is formed, which can initiate transcription.

It catalyses the reaction RNA(n) + a ribonucleoside 5'-triphosphate = RNA(n+1) + diphosphate. Functionally, DNA-dependent RNA polymerase catalyzes the transcription of DNA into RNA using the four ribonucleoside triphosphates as substrates. The sequence is that of DNA-directed RNA polymerase subunit alpha from Porphyromonas gingivalis (strain ATCC BAA-308 / W83).